Consider the following 319-residue polypeptide: Melanoma-associated antigen B2 (319 aa).

Residues M1 to K17 are compositionally biased toward basic residues. Residues M1–T112 are disordered. Low complexity-rich tracts occupy residues P39–G57, T67–T79, and A94–S105. Phosphoserine is present on residues S77 and S105. One can recognise an MAGE domain in the interval L111–A310.

As to quaternary structure, interacts with TRIM28. As to expression, expressed in testis and placenta, and in a significant fraction of tumors of various histologic types.

Its function is as follows. May enhance ubiquitin ligase activity of RING-type zinc finger-containing E3 ubiquitin-protein ligases. Proposed to act through recruitment and/or stabilization of the Ubl-conjugating enzyme (E2) at the E3:substrate complex. The sequence is that of Melanoma-associated antigen B2 (MAGEB2) from Homo sapiens (Human).